The sequence spans 107 residues: uncharacterized protein (107 aa).

Positions 88–107 are disordered; sequence GSTPWGSGRQVNAARPIGGR.

The protein localises to the virion. This is an uncharacterized protein from Acanthamoeba polyphaga (Amoeba).